A 657-amino-acid polypeptide reads, in one-letter code: Threonine--tRNA ligase (657 aa).

The TGS domain maps to serine 7–threonine 70. A catalytic region spans residues aspartate 253–proline 555. Zn(2+)-binding residues include cysteine 351, histidine 402, and histidine 532.

Belongs to the class-II aminoacyl-tRNA synthetase family. In terms of assembly, homodimer. Requires Zn(2+) as cofactor.

The protein resides in the cytoplasm. The catalysed reaction is tRNA(Thr) + L-threonine + ATP = L-threonyl-tRNA(Thr) + AMP + diphosphate + H(+). Its function is as follows. Catalyzes the attachment of threonine to tRNA(Thr) in a two-step reaction: L-threonine is first activated by ATP to form Thr-AMP and then transferred to the acceptor end of tRNA(Thr). Also edits incorrectly charged L-seryl-tRNA(Thr). This chain is Threonine--tRNA ligase, found in Prosthecochloris aestuarii (strain DSM 271 / SK 413).